Here is a 382-residue protein sequence, read N- to C-terminus: Telomere-binding protein OPG082 (382 aa).

Belongs to the orthopoxvirus OPG082 family.

The protein resides in the virion. Functionally, binds to the hairpin form of the viral telomeric sequence. Might direct genome encapsidation into the virus particle. The polypeptide is Telomere-binding protein OPG082 (OPG082) (Homo sapiens (Human)).